The sequence spans 1450 residues: Phospholipase B1, membrane-associated (1450 aa).

A signal peptide spans 1–27 (MESWPGVSLVGLLLLLLLGQGPSQIHG). Residues 28–1422 (SSGENTSQPQ…KAKENSNTLY (1395 aa)) are Extracellular-facing. Residues Asn-32, Asn-45, and Asn-179 are each glycosylated (N-linked (GlcNAc...) asparagine). Tandem repeats lie at residues 41–351 (RTLK…YRNS), 366–711 (MKEG…TKNS), and 712–1058 (NLGH…FRNS). The tract at residues 41 to 1407 (RTLKNFSFPC…NPFLYTVRNS (1367 aa)) is 4 X 308-326 AA approximate repeats. Catalysis depends on residues Ser-404, Asp-518, and His-659. Asn-699 carries an N-linked (GlcNAc...) asparagine glycan. A compositionally biased stretch (polar residues) spans 708 to 720 (TKNSNLGHGTSMS). The interval 708–734 (TKNSNLGHGTSMSCEEKAPSASPPTSV) is disordered. N-linked (GlcNAc...) asparagine glycans are attached at residues Asn-787, Asn-801, Asn-844, Asn-880, Asn-926, Asn-1059, Asn-1226, Asn-1280, Asn-1383, and Asn-1387. Repeat unit 4 spans residues 1068–1407 (IENWGSDFLC…NPFLYTVRNS (340 aa)). The interval 1408–1450 (QILLDKAKENSNTLYWAVPVAAVGGLVVGILGMMLWRTVRLVQ) is necessary for membrane localization. The helical transmembrane segment at 1423-1443 (WAVPVAAVGGLVVGILGMMLW) threads the bilayer. The Cytoplasmic segment spans residues 1444–1450 (RTVRLVQ).

This sequence belongs to the 'GDSL' lipolytic enzyme family. Phospholipase B1 subfamily. Undergoes proteolytic cleavage in the ileum. Expressed in the ileum mucosa, Paneth cells spermatocytes, spermatids and sperm (at protein level). Expressed in the ileum, jejunum, esophagus and testis.

It is found in the apical cell membrane. The catalysed reaction is a 1,2-diacyl-sn-glycero-3-phosphocholine + H2O = a 1-acyl-sn-glycero-3-phosphocholine + a fatty acid + H(+). The enzyme catalyses a 1-O-alkyl-2-acyl-sn-glycero-3-phosphocholine + H2O = a 1-O-alkyl-sn-glycero-3-phosphocholine + a fatty acid + H(+). It carries out the reaction a 1-acyl-sn-glycero-3-phosphocholine + H2O = sn-glycerol 3-phosphocholine + a fatty acid + H(+). It catalyses the reaction a triacylglycerol + H2O = a diacylglycerol + a fatty acid + H(+). The catalysed reaction is 1,2-dihexadecanoyl-sn-glycero-3-phosphocholine + H2O = 1-hexadecanoyl-sn-glycero-3-phosphocholine + hexadecanoate + H(+). The enzyme catalyses 1-hexadecanoyl-2-(9Z-octadecenoyl)-sn-glycero-3-phosphocholine + H2O = 1-hexadecanoyl-sn-glycero-3-phosphocholine + (9Z)-octadecenoate + H(+). It carries out the reaction 1,2-di-(9Z-octadecenoyl)-sn-glycero-3-phosphocholine + H2O = 1-(9Z-octadecenoyl)-sn-glycero-3-phosphocholine + (9Z)-octadecenoate + H(+). It catalyses the reaction 1-hexadecanoyl-2-(9Z,12Z-octadecadienoyl)-sn-glycero-3-phosphocholine + H2O = (9Z,12Z)-octadecadienoate + 1-hexadecanoyl-sn-glycero-3-phosphocholine + H(+). The catalysed reaction is 1-hexadecanoyl-2-(9Z,12Z-octadecadienoyl)-sn-glycero-3-phosphocholine + H2O = 2-(9Z,12Z-octadecadienoyl)-sn-glycero-3-phosphocholine + hexadecanoate + H(+). The enzyme catalyses 1-hexadecanoyl-2-(9Z-octadecenoyl)-sn-glycero-3-phosphoethanolamine + H2O = 1-hexadecanoyl-sn-glycero-3-phosphoethanolamine + (9Z)-octadecenoate + H(+). It carries out the reaction 1-hexadecanoyl-2-(9Z-octadecenoyl)-sn-glycero-3-phospho-(1'-sn-glycerol) + H2O = 1-hexadecanoyl-sn-glycero-3-phospho-(1'-sn-glycerol) + (9Z)-octadecenoate + H(+). It catalyses the reaction 1,2-dihexadecanoyl-sn-glycero-3-phosphocholine + 2 H2O = sn-glycerol 3-phosphocholine + 2 hexadecanoate + 2 H(+). The catalysed reaction is 1-O-hexadecyl-2-(9Z)-octadecenoyl-sn-glycero-3-phosphocholine + H2O = 1-O-hexadecyl-sn-glycero-3-phosphocholine + (9Z)-octadecenoate + H(+). The enzyme catalyses 1-hexadecanoyl-sn-glycero-3-phosphocholine + H2O = sn-glycerol 3-phosphocholine + hexadecanoate + H(+). It carries out the reaction 1,2,3-tri-(9Z-octadecenoyl)-glycerol + H2O = di-(9Z)-octadecenoylglycerol + (9Z)-octadecenoate + H(+). It catalyses the reaction 1-hexadecanoyl-2-(9Z)-octadecenoyl-3-octadecanoyl-sn-glycerol + H2O = 1-hexadecanoyl-2-(9Z-octadecenoyl)-sn-glycerol + octadecanoate + H(+). The catalysed reaction is 1,3-dihexadecanoyl-2-(9Z-octadecenoyl)glycerol + H2O = 1,3-dihexadecanoylglycerol + (9Z)-octadecenoate + H(+). The enzyme catalyses 1,3-dihexadecanoyl-2-(9Z-octadecenoyl)glycerol + H2O = 1-hexadecanoyl-2-(9Z-octadecenoyl)-glycerol + hexadecanoate + H(+). It carries out the reaction 1-hexadecanoyl-2-(9Z)-octadecenoyl-3-octadecanoyl-sn-glycerol + H2O = 1-hexadecanoyl-3-octadecanoyl-sn-glycerol + (9Z)-octadecenoate + H(+). It catalyses the reaction 1-hexadecanoyl-2-(9Z)-octadecenoyl-3-octadecanoyl-sn-glycerol + H2O = 2-(9Z-octadecenoyl)-3-octadecanoyl-sn-glycerol + hexadecanoate + H(+). The catalysed reaction is 1-octadecanoyl-2-(9Z,12Z)-octadecadienoyl-sn-glycerol + H2O = 1-octadecanoyl-sn-glycerol + (9Z,12Z)-octadecadienoate + H(+). The enzyme catalyses 1,2-di-(9Z-octadecenoyl)-sn-glycerol + H2O = 1-(9Z-octadecenoyl)-sn-glycerol + (9Z)-octadecenoate + H(+). It carries out the reaction 2,3-di-(9Z)-octadecenoyl-sn-glycerol + H2O = 3-(9Z-octadecenoyl)-sn-glycerol + (9Z)-octadecenoate + H(+). It catalyses the reaction 1,3-di-(9Z-octadecenoyl)-glycerol + H2O = 1-(9Z-octadecenoyl)-glycerol + (9Z)-octadecenoate + H(+). The catalysed reaction is 1-(9Z-octadecenoyl)-glycerol + H2O = glycerol + (9Z)-octadecenoate + H(+). The enzyme catalyses 2-(9Z-octadecenoyl)-glycerol + H2O = glycerol + (9Z)-octadecenoate + H(+). With respect to regulation, up-regulated by bile acids such as deoxycholate. Inhibited by diisopropyl fluorophosphate. Its function is as follows. Calcium-independent membrane-associated phospholipase that catalyzes complete diacylation of phospholipids by hydrolyzing both sn-1 and sn-2 fatty acyl chains attached to the glycerol backbone (phospholipase B activity). Has dual phospholipase and lysophospholipase activities toward diacylphospholipids. Preferentially cleaves sn-2 ester bonds over sn-1 bonds. Acts as a lipase toward glycerolipid substrates. Hydrolyzes fatty acyl chains of diacylglycerols with preference for the sn-2 position and of triacylglycerols with not positional selectivity. May also hydrolyze long chain retinyl esters such as retinyl palmitate. May contribute to digestion of dietary phospholipids, glycerolipids and retinoids, facilitating lipid absorption at the brush border. This Rattus norvegicus (Rat) protein is Phospholipase B1, membrane-associated (Plb1).